The primary structure comprises 359 residues: MVPNYSTEETVKRIHVDCPVSGRHSYIYIMVPTVYSIIFIIGIFGNSLVVIVIYCYMKLKTVASIFLLNLALADLCFLITLPLWAAYTAMEYQWPFGNCLCKLASAGISFNLYASVFLLTCLSIDRYLAIVHPVKSRIRRTMFVARVTCIVIWLLAGVASLPVIIHRNIFFAENLNMTVCGFRYDNNNTTLRVGLGLSKNLLGFLIPFLIILTSYTLIWKTLKKAYQIQRNKTRNDDIFKMIVAIVFFFFFSWIPHQVFTFLDVLIQLHVITDCKITDIVDTAMPFTICIAYFNNCLNPFFYVFFGKNFKKYFLQLIKYIPPNVSTHPSLTTKMSSLSYRPPENIRLPTKKTAGSFDTE.

Residues Met-1–Ser-25 are Extracellular-facing. Asn-4 is a glycosylation site (N-linked (GlcNAc...) asparagine). Asp-17 serves as a coordination point for angiotensin II. Disulfide bonds link Cys-18–Cys-274 and Cys-101–Cys-180. The chain crosses the membrane as a helical span at residues Tyr-26–Cys-55. Topologically, residues Tyr-56 to Thr-61 are cytoplasmic. The helical transmembrane segment at Val-62–Ala-89 threads the bilayer. Over Met-90 to Asn-98 the chain is Extracellular. A helical membrane pass occupies residues Cys-99–Asp-125. Residues Arg-126–Thr-141 lie on the Cytoplasmic side of the membrane. The chain crosses the membrane as a helical span at residues Met-142–Ile-165. Residues His-166 to Thr-190 are Extracellular-facing. Arg-167 contributes to the angiotensin II binding site. N-linked (GlcNAc...) asparagine glycosylation is present at Asn-176. Residues Phe-182 and Tyr-184 each contribute to the angiotensin II site. Asn-187 and Asn-188 each carry an N-linked (GlcNAc...) asparagine glycan. Residues Leu-191–Thr-216 form a helical membrane-spanning segment. Lys-199 lines the angiotensin II pocket. Residues Leu-217 to Phe-239 lie on the Cytoplasmic side of the membrane. The helical transmembrane segment at Lys-240 to Leu-268 threads the bilayer. The Extracellular segment spans residues His-269 to Asp-278. Residues Ile-279–Phe-304 traverse the membrane as a helical segment. Topologically, residues Phe-305 to Glu-359 are cytoplasmic.

This sequence belongs to the G-protein coupled receptor 1 family. Post-translationally, C-terminal Ser or Thr residues may be phosphorylated. As to expression, adrenal medulla.

The protein resides in the cell membrane. Its function is as follows. Receptor for angiotensin II, a vasoconstricting peptide, which acts as a key regulator of blood pressure and sodium retention by the kidney. The activated receptor in turn couples to G-alpha proteins G(q) (GNAQ, GNA11, GNA14 or GNA15) and thus activates phospholipase C and increases the cytosolic Ca(2+) concentrations, which in turn triggers cellular responses such as stimulation of protein kinase C. This Meleagris gallopavo (Wild turkey) protein is Type-1 angiotensin II receptor (AGTR1).